We begin with the raw amino-acid sequence, 106 residues long: ATP-dependent Clp protease adapter protein ClpS (106 aa).

Basic and acidic residues predominate over residues 1–13; it reads MPRNTSHEHDHGL. A disordered region spans residues 1 to 20; the sequence is MPRNTSHEHDHGLMVEASKP.

This sequence belongs to the ClpS family. Binds to the N-terminal domain of the chaperone ClpA.

Its function is as follows. Involved in the modulation of the specificity of the ClpAP-mediated ATP-dependent protein degradation. This is ATP-dependent Clp protease adapter protein ClpS from Xanthomonas axonopodis pv. citri (strain 306).